Reading from the N-terminus, the 159-residue chain is SsrA-binding protein (159 aa).

The interval 131 to 159 is disordered; the sequence is KGKKLHDKRESEKERDWNRQKSRLLKDNG. Basic and acidic residues predominate over residues 137-159; sequence DKRESEKERDWNRQKSRLLKDNG.

The protein belongs to the SmpB family.

It localises to the cytoplasm. Required for rescue of stalled ribosomes mediated by trans-translation. Binds to transfer-messenger RNA (tmRNA), required for stable association of tmRNA with ribosomes. tmRNA and SmpB together mimic tRNA shape, replacing the anticodon stem-loop with SmpB. tmRNA is encoded by the ssrA gene; the 2 termini fold to resemble tRNA(Ala) and it encodes a 'tag peptide', a short internal open reading frame. During trans-translation Ala-aminoacylated tmRNA acts like a tRNA, entering the A-site of stalled ribosomes, displacing the stalled mRNA. The ribosome then switches to translate the ORF on the tmRNA; the nascent peptide is terminated with the 'tag peptide' encoded by the tmRNA and targeted for degradation. The ribosome is freed to recommence translation, which seems to be the essential function of trans-translation. This is SsrA-binding protein from Rhizobium leguminosarum bv. trifolii (strain WSM2304).